A 261-amino-acid polypeptide reads, in one-letter code: Proliferating cell nuclear antigen (261 aa).

An N6-acetyllysine mark is found at K14, K77, and K80. Residues 61–80 mediate DNA binding; sequence RCDRNLAMGVNLTSMSKILK. C135 and C162 form a disulfide bridge. K164 participates in a covalent cross-link: Glycyl lysine isopeptide (Lys-Gly) (interchain with G-Cter in SUMO2); alternate. K164 is covalently cross-linked (Glycyl lysine isopeptide (Lys-Gly) (interchain with G-Cter in ubiquitin); alternate). The residue at position 211 (Y211) is a Phosphotyrosine; by EGFR. The residue at position 248 (K248) is an N6-acetyllysine. K254 participates in a covalent cross-link: Glycyl lysine isopeptide (Lys-Gly) (interchain with G-Cter in SUMO2).

It belongs to the PCNA family. As to quaternary structure, homotrimer. Interacts with p300/EP300; the interaction occurs on chromatin in UV-irradiated damaged cells. Interacts with CREBBP (via transactivation domain and C-terminus); the interaction occurs on chromatin in UV-irradiated damaged cells. Directly interacts with POLD1, POLD3 and POLD4 subunits of the DNA polymerase delta complex, POLD3 being the major interacting partner; the interaction with POLD3 is inhibited by CDKN1A/p21(CIP1). Forms a complex with activator 1 heteropentamer in the presence of ATP. Interacts with EXO1, POLH, POLK, DNMT1, ERCC5, FEN1, CDC6 and POLDIP2. Interacts with POLB. Interacts with APEX2; this interaction is triggered by reactive oxygen species and increased by misincorporation of uracil in nuclear DNA. Forms a ternary complex with DNTTIP2 and core histone. Interacts with KCTD10 and PPP1R15A. Interacts with SMARCA5/SNF2H. Interacts with BAZ1B/WSTF; the interaction is direct and is required for BAZ1B/WSTF binding to replication foci during S phase. Interacts with HLTF and SHPRH. Interacts with NUDT15; this interaction is disrupted in response to UV irradiation and acetylation. Interacts with CDKN1A/p21(CIP1) and CDT1; interacts via their PIP-box which also recruits the DCX(DTL) complex. The interaction with CDKN1A inhibits POLD3 binding. Interacts with DDX11. Interacts with EGFR; positively regulates PCNA. Interacts with PARPBP. Interacts (when ubiquitinated) with SPRTN; leading to enhance RAD18-mediated PCNA ubiquitination. Interacts (when polyubiquitinated) with ZRANB3. Interacts with SMARCAD1. Interacts with CDKN1C. Interacts with PCLAF (via PIP-box). Interacts with RTEL1 (via PIP-box); the interaction is direct and essential for the suppression of telomere fragility. Interacts with FAM111A (via PIP-box); the interaction is direct and required for PCNA loading on chromatin binding. Interacts with LIG1. Interacts with SETMAR. Interacts with ANKRD17. Interacts with FBXO18/FBH1 (via PIP-box); the interaction recruits the DCX(DTL) complex and promotes ubiquitination and degradation of FBXO18/FBH1. Interacts with POLN. Interacts with SDE2 (via PIP-box); the interaction is direct and prevents ultraviolet light induced monoubiquitination. Component of the replisome complex composed of at least DONSON, MCM2, MCM7, PCNA and TICRR; interaction at least with PCNA occurs during DNA replication. Interacts with MAPK15; the interaction is chromatin binding dependent and prevents MDM2-mediated PCNA destruction by inhibiting the association of PCNA with MDM2. Interacts with PARP10 (via PIP-box). Interacts with DDI2. Interacts with HMCES (via PIP-box). Interacts with TRAIP (via PIP-box). Interacts with UHRF2. Interacts with ALKBH2; this interaction is enhanced during the S-phase of the cell cycle. Interacts with ATAD5; the interaction promotes USP1-mediated PCNA deubiquitination. Interacts (when phosphorylated) with GRB2. Interacts with nuclear UNG; this interaction mediates UNG recruitment to S-phase replication foci. Interacts with ERCC6L2 (via an atypical PIP-box); this interaction facilitates cenrtomeric localization of ERCC6L2. Phosphorylated. Phosphorylation at Tyr-211 by EGFR stabilizes chromatin-associated PCNA. In terms of processing, acetylated by CREBBP and p300/EP300; preferentially acetylated by CREBBP on Lys-80, Lys-13 and Lys-14 and on Lys-77 by p300/EP300 upon loading on chromatin in response to UV irradiation. Lysine acetylation disrupts association with chromatin, hence promoting PCNA ubiquitination and proteasomal degradation in response to UV damage in a CREBBP- and EP300-dependent manner. Acetylation disrupts interaction with NUDT15 and promotes degradation. Post-translationally, ubiquitinated. Following DNA damage, can be either monoubiquitinated to stimulate direct bypass of DNA lesions by specialized DNA polymerases or polyubiquitinated to promote recombination-dependent DNA synthesis across DNA lesions by template switching mechanisms. Following induction of replication stress, monoubiquitinated by the UBE2B-RAD18 complex on Lys-164, leading to recruit translesion (TLS) polymerases, which are able to synthesize across DNA lesions in a potentially error-prone manner. An error-free pathway also exists and requires non-canonical polyubiquitination on Lys-164 through 'Lys-63' linkage of ubiquitin moieties by the E2 complex UBE2N-UBE2V2 and the E3 ligases, HLTF, RNF8 and SHPRH. This error-free pathway, also known as template switching, employs recombination mechanisms to synthesize across the lesion, using as a template the undamaged, newly synthesized strand of the sister chromatid. Monoubiquitination at Lys-164 also takes place in undamaged proliferating cells, and is mediated by the DCX(DTL) complex, leading to enhance PCNA-dependent translesion DNA synthesis. Sumoylated during S phase. Methylated on glutamate residues by ARMT1.

It is found in the nucleus. Auxiliary protein of DNA polymerase delta and epsilon, is involved in the control of eukaryotic DNA replication by increasing the polymerase's processibility during elongation of the leading strand. Induces a robust stimulatory effect on the 3'-5' exonuclease and 3'-phosphodiesterase, but not apurinic-apyrimidinic (AP) endonuclease, APEX2 activities. Has to be loaded onto DNA in order to be able to stimulate APEX2. Plays a key role in DNA damage response (DDR) by being conveniently positioned at the replication fork to coordinate DNA replication with DNA repair and DNA damage tolerance pathways. Acts as a loading platform to recruit DDR proteins that allow completion of DNA replication after DNA damage and promote postreplication repair: Monoubiquitinated PCNA leads to recruitment of translesion (TLS) polymerases, while 'Lys-63'-linked polyubiquitination of PCNA is involved in error-free pathway and employs recombination mechanisms to synthesize across the lesion. This is Proliferating cell nuclear antigen (PCNA) from Bos taurus (Bovine).